The following is a 113-amino-acid chain: Beta-microseminoprotein (113 aa).

Positions 1 to 20 (MEAWLGSLLFLATMVIASKA) are cleaved as a signal peptide. 5 disulfide bridges follow: C22/C69, C38/C61, C56/C92, C59/C68, and C83/C106.

It belongs to the beta-microseminoprotein family. In terms of assembly, homodimer; Interacts with PI16.

The protein localises to the secreted. This Mus musculus (Mouse) protein is Beta-microseminoprotein (Msmb).